We begin with the raw amino-acid sequence, 212 residues long: Ribonuclease P protein component 3 (212 aa).

Belongs to the eukaryotic/archaeal RNase P protein component 3 family. In terms of assembly, consists of a catalytic RNA component and at least 4-5 protein subunits.

It is found in the cytoplasm. The catalysed reaction is Endonucleolytic cleavage of RNA, removing 5'-extranucleotides from tRNA precursor.. Part of ribonuclease P, a protein complex that generates mature tRNA molecules by cleaving their 5'-ends. The sequence is that of Ribonuclease P protein component 3 from Pyrococcus abyssi (strain GE5 / Orsay).